Reading from the N-terminus, the 320-residue chain is Malate dehydrogenase (320 aa).

Residues 10–15 (GSGMIG) and Asp34 each bind NAD(+). Positions 83 and 89 each coordinate substrate. NAD(+) is bound by residues Asn96 and 119 to 121 (ITN). Residues Asn121 and Arg152 each contribute to the substrate site. The Proton acceptor role is filled by His176.

It belongs to the LDH/MDH superfamily. MDH type 3 family.

It catalyses the reaction (S)-malate + NAD(+) = oxaloacetate + NADH + H(+). Catalyzes the reversible oxidation of malate to oxaloacetate. This is Malate dehydrogenase from Brucella melitensis biotype 1 (strain ATCC 23456 / CCUG 17765 / NCTC 10094 / 16M).